An 86-amino-acid polypeptide reads, in one-letter code: Co-chaperonin GroES (86 aa).

Belongs to the GroES chaperonin family. Heptamer of 7 subunits arranged in a ring. Interacts with the chaperonin GroEL.

It localises to the cytoplasm. Functionally, together with the chaperonin GroEL, plays an essential role in assisting protein folding. The GroEL-GroES system forms a nano-cage that allows encapsulation of the non-native substrate proteins and provides a physical environment optimized to promote and accelerate protein folding. GroES binds to the apical surface of the GroEL ring, thereby capping the opening of the GroEL channel. The chain is Co-chaperonin GroES from Campylobacter concisus (strain 13826).